A 302-amino-acid polypeptide reads, in one-letter code: Bifunctional ligase/repressor BirA (302 aa).

The segment at residues 14 to 33 (QPKVRSELEKFSKNLEEDIQ) is a DNA-binding region (H-T-H motif). The BPL/LPL catalytic domain occupies 62 to 236 (QISTALFPYS…HLYTRLNIFE (175 aa)). Biotin-binding positions include 80–82 (STN), Gln103, 107–109 (RGR), and Lys167.

Belongs to the biotin--protein ligase family.

The catalysed reaction is biotin + L-lysyl-[protein] + ATP = N(6)-biotinyl-L-lysyl-[protein] + AMP + diphosphate + H(+). Its function is as follows. Acts both as a biotin--[acetyl-CoA-carboxylase] ligase and a biotin-operon repressor. In the presence of ATP, BirA activates biotin to form the BirA-biotinyl-5'-adenylate (BirA-bio-5'-AMP or holoBirA) complex. HoloBirA can either transfer the biotinyl moiety to the biotin carboxyl carrier protein (BCCP) subunit of acetyl-CoA carboxylase, or bind to the biotin operator site and inhibit transcription of the operon. This chain is Bifunctional ligase/repressor BirA, found in Haemophilus influenzae (strain ATCC 51907 / DSM 11121 / KW20 / Rd).